Consider the following 166-residue polypeptide: MDNWVCYLIMSLDSKETYIGSTNNRQRRLNDHNNLNPSRKGAKRTRGRTWIPILYISGFENKNACLSFESGWKRLSKKRNIQRLLLINEISNIKLNYNNDPKWNRIMDLLYFVHNITFIGTKFKLNSDVKHPVILPENLFIEIMNEDWITELSWPYFINTYMISFD.

The GIY-YIG domain maps to 2-82 (DNWVCYLIMS…KRLSKKRNIQ (81 aa)). The disordered stretch occupies residues 23–43 (NNRQRRLNDHNNLNPSRKGAK).

This is an uncharacterized protein from Acanthamoeba polyphaga mimivirus (APMV).